A 479-amino-acid chain; its full sequence is Adenosylhomocysteinase (479 aa).

3 residues coordinate substrate: threonine 56, aspartate 133, and glutamate 199. 200–202 (TTT) provides a ligand contact to NAD(+). The substrate site is built by lysine 229 and aspartate 233. Residues asparagine 234, 263 to 268 (GYGDVG), glutamate 286, asparagine 321, 342 to 344 (IGH), and asparagine 390 each bind NAD(+).

Belongs to the adenosylhomocysteinase family. As to quaternary structure, homotetramer. Requires NAD(+) as cofactor.

It carries out the reaction S-adenosyl-L-homocysteine + H2O = L-homocysteine + adenosine. Its pathway is amino-acid biosynthesis; L-homocysteine biosynthesis; L-homocysteine from S-adenosyl-L-homocysteine: step 1/1. Its function is as follows. Adenosylhomocysteine is a competitive inhibitor of S-adenosyl-L-methionine-dependent methyl transferase reactions; therefore adenosylhomocysteinase may play a key role in the control of methylations via regulation of the intracellular concentration of adenosylhomocysteine. In Plasmodium yoelii yoelii, this protein is Adenosylhomocysteinase.